A 117-amino-acid polypeptide reads, in one-letter code: uncharacterized protein (117 aa).

The interval 16–56 is disordered; that stretch reads FSQSSDGRSNGGGSSSGDSVSTTSDGLLTTGTSPNTSSTSL. A compositionally biased stretch (low complexity) spans 31 to 56; sequence SGDSVSTTSDGLLTTGTSPNTSSTSL.

This is an uncharacterized protein from Saccharomyces cerevisiae (strain ATCC 204508 / S288c) (Baker's yeast).